The sequence spans 260 residues: UPF0246 protein Bamb_2261 (260 aa).

This sequence belongs to the UPF0246 family.

The sequence is that of UPF0246 protein Bamb_2261 from Burkholderia ambifaria (strain ATCC BAA-244 / DSM 16087 / CCUG 44356 / LMG 19182 / AMMD) (Burkholderia cepacia (strain AMMD)).